Consider the following 465-residue polypeptide: Adenosylhomocysteinase (465 aa).

The substrate site is built by T56, D131, and E191. NAD(+) is bound at residue 192 to 194 (TTT). K221 and D225 together coordinate substrate. NAD(+) is bound by residues N226, 255-260 (GYGDVG), E278, N313, 334-336 (IGH), and N379.

The protein belongs to the adenosylhomocysteinase family. NAD(+) is required as a cofactor.

The protein localises to the cytoplasm. It catalyses the reaction S-adenosyl-L-homocysteine + H2O = L-homocysteine + adenosine. It participates in amino-acid biosynthesis; L-homocysteine biosynthesis; L-homocysteine from S-adenosyl-L-homocysteine: step 1/1. May play a key role in the regulation of the intracellular concentration of adenosylhomocysteine. The protein is Adenosylhomocysteinase of Bartonella henselae (strain ATCC 49882 / DSM 28221 / CCUG 30454 / Houston 1) (Rochalimaea henselae).